The chain runs to 411 residues: Exodeoxyribonuclease 7 large subunit (411 aa).

This sequence belongs to the XseA family. Heterooligomer composed of large and small subunits.

The protein localises to the cytoplasm. It carries out the reaction Exonucleolytic cleavage in either 5'- to 3'- or 3'- to 5'-direction to yield nucleoside 5'-phosphates.. Bidirectionally degrades single-stranded DNA into large acid-insoluble oligonucleotides, which are then degraded further into small acid-soluble oligonucleotides. This Mycobacterium sp. (strain JLS) protein is Exodeoxyribonuclease 7 large subunit.